The primary structure comprises 359 residues: Phosphate acyltransferase (359 aa).

This sequence belongs to the PlsX family. Homodimer. Probably interacts with PlsY.

Its subcellular location is the cytoplasm. The catalysed reaction is a fatty acyl-[ACP] + phosphate = an acyl phosphate + holo-[ACP]. It functions in the pathway lipid metabolism; phospholipid metabolism. Functionally, catalyzes the reversible formation of acyl-phosphate (acyl-PO(4)) from acyl-[acyl-carrier-protein] (acyl-ACP). This enzyme utilizes acyl-ACP as fatty acyl donor, but not acyl-CoA. The chain is Phosphate acyltransferase from Salmonella heidelberg (strain SL476).